The following is a 137-amino-acid chain: Glutamate mutase sigma subunit (137 aa).

The 135-residue stretch at 3 to 137 (KKTIVLGVIG…ADLKKDLNIE (135 aa)) folds into the B12-binding domain. Adenosylcob(III)alamin is bound by residues 13–17 (SDCHA), H16, 61–63 (SSL), and 93–97 (NIVVG).

The protein belongs to the methylaspartate mutase GlmS subunit family. Heterotetramer composed of 2 epsilon subunits (GlmE) and 2 sigma subunits (GlmS). GlmE exists as a homodimer and GlmS as a monomer. Requires adenosylcob(III)alamin as cofactor.

The catalysed reaction is (2S,3S)-3-methyl-L-aspartate = L-glutamate. It participates in amino-acid degradation; L-glutamate degradation via mesaconate pathway; acetate and pyruvate from L-glutamate: step 1/4. Its activity is regulated as follows. Competitively inhibited by (2S,4S)-4-fluoroglutamate, 2-methyleneglutarate, (2R,3RS)-3-fluoroglutamate and (S)-3-methylitaconate. In terms of biological role, catalyzes the carbon skeleton rearrangement of L-glutamate to L-threo-3-methylaspartate ((2S,3S)-3-methylaspartate). The sequence is that of Glutamate mutase sigma subunit from Clostridium cochlearium.